The following is a 418-amino-acid chain: Dwarfin sma-2 (418 aa).

An MH1 domain is found at 8 to 134 (KKITERLKWK…YKRVHATGVL (127 aa)). 4 residues coordinate Zn(2+): cysteine 62, cysteine 107, cysteine 119, and histidine 124. The MH2 domain maps to 222–418 (WATVSYYELN…PTPRPISSIS (197 aa)).

It belongs to the dwarfin/SMAD family.

It is found in the cytoplasm. The protein resides in the nucleus. Functionally, involved in TGF-beta pathway. Plays a role in male tail tip morphogenesis. The protein is Dwarfin sma-2 of Caenorhabditis elegans.